Consider the following 557-residue polypeptide: Potassium-transporting ATPase potassium-binding subunit (557 aa).

Helical transmembrane passes span 5 to 25 (GFLL…PLGS), 63 to 83 (LCAI…MLLG), 132 to 152 (GLTV…FALI), 170 to 190 (LLRI…LFFI), 253 to 273 (FVQM…FGEV), 283 to 303 (LLWA…WAEV), 329 to 349 (VLVS…AVIA), 356 to 376 (ALGG…FGGV), 379 to 399 (GLYG…LMIG), 416 to 436 (LTAL…ALAM), 484 to 504 (LLAF…MAIA), and 526 to 546 (LFVG…FIPA).

Belongs to the KdpA family. The system is composed of three essential subunits: KdpA, KdpB and KdpC.

Its subcellular location is the cell inner membrane. Functionally, part of the high-affinity ATP-driven potassium transport (or Kdp) system, which catalyzes the hydrolysis of ATP coupled with the electrogenic transport of potassium into the cytoplasm. This subunit binds the periplasmic potassium ions and delivers the ions to the membrane domain of KdpB through an intramembrane tunnel. The sequence is that of Potassium-transporting ATPase potassium-binding subunit from Escherichia coli (strain K12 / MC4100 / BW2952).